The primary structure comprises 350 residues: Ferredoxin--NADP reductase (350 aa).

FAD-binding residues include Thr22, Glu41, Gln49, Tyr54, Val94, Phe129, Asp295, and Ser336.

The protein belongs to the ferredoxin--NADP reductase type 2 family. Homodimer. Requires FAD as cofactor.

It carries out the reaction 2 reduced [2Fe-2S]-[ferredoxin] + NADP(+) + H(+) = 2 oxidized [2Fe-2S]-[ferredoxin] + NADPH. This is Ferredoxin--NADP reductase from Chlorobium luteolum (strain DSM 273 / BCRC 81028 / 2530) (Pelodictyon luteolum).